Reading from the N-terminus, the 185-residue chain is MSKSASRARLLEIIRRRSFGRGEVTLASGRKSDFYFNLKPTMMDPEGATLLAELTYEALKDDGYDYIGGLEMGAVPLAGAIAQISWIKGHPIAAFFVRKKPKEHGARLAIEGLTRDETLAGKRIVVVEDVTTTGGSAMKAVETLREAGAEVSLVFTMVDREEGAAEAFAAAGLSFRALYKAREFL.

5-phospho-alpha-D-ribose 1-diphosphate is bound by residues R98, K99, K102, H104, and 128–136 (EDVTTTGGS). T132 and R160 together coordinate orotate.

Belongs to the purine/pyrimidine phosphoribosyltransferase family. PyrE subfamily. In terms of assembly, homodimer. The cofactor is Mg(2+).

It catalyses the reaction orotidine 5'-phosphate + diphosphate = orotate + 5-phospho-alpha-D-ribose 1-diphosphate. It participates in pyrimidine metabolism; UMP biosynthesis via de novo pathway; UMP from orotate: step 1/2. Its function is as follows. Catalyzes the transfer of a ribosyl phosphate group from 5-phosphoribose 1-diphosphate to orotate, leading to the formation of orotidine monophosphate (OMP). The sequence is that of Orotate phosphoribosyltransferase from Bradyrhizobium sp. (strain ORS 278).